Consider the following 311-residue polypeptide: Mediator of RNA polymerase II transcription subunit 27 (311 aa).

At Ser132 the chain carries Phosphoserine. Position 134 is an N6-methyllysine (Lys134).

The protein belongs to the Mediator complex subunit 27 family. Component of the Mediator complex, which is composed of MED1, MED4, MED6, MED7, MED8, MED9, MED10, MED11, MED12, MED13, MED13L, MED14, MED15, MED16, MED17, MED18, MED19, MED20, MED21, MED22, MED23, MED24, MED25, MED26, MED27, MED29, MED30, MED31, CCNC, CDK8 and CDC2L6/CDK11. The MED12, MED13, CCNC and CDK8 subunits form a distinct module termed the CDK8 module. Mediator containing the CDK8 module is less active than Mediator lacking this module in supporting transcriptional activation. Individual preparations of the Mediator complex lacking one or more distinct subunits have been variously termed ARC, CRSP, DRIP, PC2, SMCC and TRAP.

Its subcellular location is the nucleus. Component of the Mediator complex, a coactivator involved in the regulated transcription of nearly all RNA polymerase II-dependent genes. Mediator functions as a bridge to convey information from gene-specific regulatory proteins to the basal RNA polymerase II transcription machinery. Mediator is recruited to promoters by direct interactions with regulatory proteins and serves as a scaffold for the assembly of a functional preinitiation complex with RNA polymerase II and the general transcription factors. In Sus scrofa (Pig), this protein is Mediator of RNA polymerase II transcription subunit 27 (MED27).